Consider the following 548-residue polypeptide: Chaperonin GroEL (548 aa).

ATP-binding positions include 30 to 33, lysine 51, 87 to 91, glycine 415, and aspartate 495; these read TLGP and DGTTT.

This sequence belongs to the chaperonin (HSP60) family. Forms a cylinder of 14 subunits composed of two heptameric rings stacked back-to-back. Interacts with the co-chaperonin GroES.

It localises to the cytoplasm. The enzyme catalyses ATP + H2O + a folded polypeptide = ADP + phosphate + an unfolded polypeptide.. Its function is as follows. Together with its co-chaperonin GroES, plays an essential role in assisting protein folding. The GroEL-GroES system forms a nano-cage that allows encapsulation of the non-native substrate proteins and provides a physical environment optimized to promote and accelerate protein folding. In Idiomarina loihiensis (strain ATCC BAA-735 / DSM 15497 / L2-TR), this protein is Chaperonin GroEL.